The chain runs to 244 residues: Uridylate kinase (244 aa).

Position 17 to 20 (17 to 20) interacts with ATP; that stretch reads KVSG. The involved in allosteric activation by GTP stretch occupies residues 25–30; it reads GDKGFG. Residue Gly-59 coordinates UMP. ATP is bound by residues Gly-60 and Arg-64. UMP contacts are provided by residues Asp-80 and 141–148; that span reads VGNPFFTT. ATP contacts are provided by Thr-168, Gln-169, Tyr-174, and Asp-177.

It belongs to the UMP kinase family. Homohexamer.

Its subcellular location is the cytoplasm. It carries out the reaction UMP + ATP = UDP + ADP. Its pathway is pyrimidine metabolism; CTP biosynthesis via de novo pathway; UDP from UMP (UMPK route): step 1/1. With respect to regulation, allosterically activated by GTP. Inhibited by UTP. In terms of biological role, catalyzes the reversible phosphorylation of UMP to UDP. The protein is Uridylate kinase of Ehrlichia ruminantium (strain Welgevonden).